Here is a 306-residue protein sequence, read N- to C-terminus: Heme A synthase (306 aa).

At 1–5 (MKALR) the chain is on the cytoplasmic side. A helical membrane pass occupies residues 6-26 (AVSLANTAVMLLAVLWGAWVT). Residues 27–56 (SSDSGDGCGASWPLCKGTFMPDWDYAAIVE) are Extracellular-facing. Cysteine 34 and cysteine 41 are disulfide-bonded. Glutamate 56 is a catalytic residue. A helical transmembrane segment spans residues 57–77 (FGHRVVSALAGLLSVAVLVWV). Histidine 59 contributes to the heme o binding site. Residues 78 to 89 (ARVRPSETRLKR) lie on the Cytoplasmic side of the membrane. Residues 90–110 (LAFGTFFFVVLQGGLGAAAVL) traverse the membrane as a helical segment. Residues 111–116 (RPQPDL) are Extracellular-facing. A helical membrane pass occupies residues 117 to 137 (VMALHFGFSLLCFTFALLVTV). Position 121 (histidine 121) interacts with heme o. Residues 138-164 (ALGQGERAAFQRPDVSAQPVAPGLRTQ) lie on the Cytoplasmic side of the membrane. A helical membrane pass occupies residues 165–185 (IWGLAVYTYLVVYLGAYVRHL). Over 186 to 206 (GASMACTGWPLCNGELIPPLY) the chain is Extracellular. Cysteine 191 and cysteine 197 are oxidised to a cystine. The helical transmembrane segment at 207–227 (GPVGANFAHRLGAALAVVLVL) threads the bilayer. Residue histidine 215 participates in heme b binding. Over 228–247 (RLWWTARRLTERDDLRRGAA) the chain is Cytoplasmic. The helical transmembrane segment at 248–268 (WALALMAAQVASGALFPLGYL) threads the bilayer. Residues 269-277 (NLLTQLLHT) are Extracellular-facing. Histidine 276 lines the heme b pocket. The chain crosses the membrane as a helical span at residues 278 to 298 (GLITGFWGVLSYLCYLTLPVG). Residues 299-306 (RETVAVSA) lie on the Cytoplasmic side of the membrane.

This sequence belongs to the COX15/CtaA family. Type 1 subfamily. Interacts with CtaB. The cofactor is heme b.

Its subcellular location is the cell membrane. It catalyses the reaction Fe(II)-heme o + 2 A + H2O = Fe(II)-heme a + 2 AH2. The protein operates within porphyrin-containing compound metabolism; heme A biosynthesis; heme A from heme O: step 1/1. Functionally, catalyzes the conversion of heme O to heme A by two successive hydroxylations of the methyl group at C8. The first hydroxylation forms heme I, the second hydroxylation results in an unstable dihydroxymethyl group, which spontaneously dehydrates, resulting in the formyl group of heme A. This Symbiobacterium thermophilum (strain DSM 24528 / JCM 14929 / IAM 14863 / T) protein is Heme A synthase.